We begin with the raw amino-acid sequence, 131 residues long: Classical arabinogalactan protein 1 (131 aa).

An N-terminal signal peptide occupies residues 1-22 (MAFSKSLVFVLLAALLISSAVA). A disordered region spans residues 22–110 (AQSPAPAPSN…APGPAQGGAV (89 aa)). A compositionally biased stretch (pro residues) spans 50–60 (APAPEVSPSPS). Over residues 61–72 (PAAALTPESSAS) the composition is skewed to low complexity. Gly108 is lipidated: GPI-anchor amidated glycine. Positions 109 to 131 (AVSNKFASFGSVAVMLTAAVLVI) are cleaved as a propeptide — removed in mature form.

Belongs to the classical AGP family. In terms of processing, O-glycosylated on the hydroxyproline residues. As to expression, predominantly expressed in flowers and at a lower level in roots and leaves.

It localises to the cell membrane. In terms of biological role, proteoglycan that seems to be implicated in diverse developmental roles such as differentiation, cell-cell recognition, embryogenesis and programmed cell death. The sequence is that of Classical arabinogalactan protein 1 (AGP1) from Arabidopsis thaliana (Mouse-ear cress).